A 458-amino-acid chain; its full sequence is Ribosomal protein uS12 methylthiotransferase RimO (458 aa).

One can recognise an MTTase N-terminal domain in the interval 8 to 119 (PTVAFAHLGC…IVDVLQRVEV (112 aa)). Residues Cys17, Cys53, Cys82, Cys157, Cys161, and Cys164 each coordinate [4Fe-4S] cluster. In terms of domain architecture, Radical SAM core spans 143-372 (TTDQAVAFLK…MALQQPISAE (230 aa)). A TRAM domain is found at 375–446 (SRWVGRTVDV…IYDLNGQMVG (72 aa)).

This sequence belongs to the methylthiotransferase family. RimO subfamily. The cofactor is [4Fe-4S] cluster.

It localises to the cytoplasm. The catalysed reaction is L-aspartate(89)-[ribosomal protein uS12]-hydrogen + (sulfur carrier)-SH + AH2 + 2 S-adenosyl-L-methionine = 3-methylsulfanyl-L-aspartate(89)-[ribosomal protein uS12]-hydrogen + (sulfur carrier)-H + 5'-deoxyadenosine + L-methionine + A + S-adenosyl-L-homocysteine + 2 H(+). Functionally, catalyzes the methylthiolation of an aspartic acid residue of ribosomal protein uS12. This Synechococcus sp. (strain CC9605) protein is Ribosomal protein uS12 methylthiotransferase RimO.